The following is a 167-amino-acid chain: Ubiquitin-conjugating enzyme E2 14 (167 aa).

Position 2 is an N-acetylalanine (alanine 2). The UBC core domain occupies 5-165; it reads QASLLLQKQL…VSRCVRRSQE (161 aa). Catalysis depends on cysteine 90, which acts as the Glycyl thioester intermediate.

Belongs to the ubiquitin-conjugating enzyme family.

The catalysed reaction is S-ubiquitinyl-[E1 ubiquitin-activating enzyme]-L-cysteine + [E2 ubiquitin-conjugating enzyme]-L-cysteine = [E1 ubiquitin-activating enzyme]-L-cysteine + S-ubiquitinyl-[E2 ubiquitin-conjugating enzyme]-L-cysteine.. It participates in protein modification; protein ubiquitination. Functionally, accepts the ubiquitin from the E1 complex and catalyzes its covalent attachment to other proteins. Involved in the formation of multiubiquitin chains. Signal the protein for selective degradation. The polypeptide is Ubiquitin-conjugating enzyme E2 14 (UBC14) (Arabidopsis thaliana (Mouse-ear cress)).